Reading from the N-terminus, the 218-residue chain is Ras-related protein Rab-4A (218 aa).

Residues glycine 23, threonine 24, glycine 25, lysine 26, serine 27, and cysteine 28 each coordinate GDP. GTP-binding residues include glycine 23, threonine 24, glycine 25, lysine 26, serine 27, cysteine 28, serine 42, histidine 44, and threonine 45. Serine 27 serves as a coordination point for Mg(2+). The Switch 1 motif lies at 44 to 49 (HTIGVE). Mg(2+)-binding residues include threonine 45 and aspartate 68. The Switch 2 signature appears at 70–79 (AGQERFRSVT). A GTP-binding site is contributed by glycine 71. Glutamine 72 is modified (5-glutamyl serotonin). GDP is bound by residues asparagine 126, lysine 127, aspartate 129, alanine 157, and leucine 158. Residues asparagine 126, lysine 127, aspartate 129, alanine 157, and leucine 158 each contribute to the GTP site. Position 190 is a phosphoserine (serine 190). Serine 204 is modified (phosphoserine; by CDK1). S-geranylgeranyl cysteine attachment occurs at residues cysteine 216 and cysteine 218. A Cysteine methyl ester modification is found at cysteine 218.

It belongs to the small GTPase superfamily. Rab family. As to quaternary structure, interacts with SGSM1, SGSM2 and SGSM3. Interacts with RAB11FIP1, RABEP1, ZFYVE20 and RUFY1. Interacts (membrane-bound form) with NDRG1; the interaction involves NDRG1 in vesicular recycling of E-cadherin. Interacts (in GTP-bound form) with GRIPAP1 (via N-terminus). Interacts with RABEP1 and RBSN. Does not interact with HPS4. Interacts with RABEP2; this interaction may mediate VEGFR2 cell surface expression. The cofactor is Mg(2+). Post-translationally, phosphorylated by CDK1 kinase during mitosis. In terms of processing, serotonylation of Gln-72 by TGM2 during activation and aggregation of platelets leads to constitutive activation of GTPase activity.

The protein localises to the membrane. It localises to the cytoplasm. Its subcellular location is the early endosome membrane. It is found in the recycling endosome membrane. The catalysed reaction is GTP + H2O = GDP + phosphate + H(+). Its activity is regulated as follows. Regulated by guanine nucleotide exchange factors (GEFs) which promote the exchange of bound GDP for free GTP. Regulated by GTPase activating proteins (GAPs) which increase the GTP hydrolysis activity. Inhibited by GDP dissociation inhibitors (GDIs). Functionally, the small GTPases Rab are key regulators of intracellular membrane trafficking, from the formation of transport vesicles to their fusion with membranes. Rabs cycle between an inactive GDP-bound form and an active GTP-bound form that is able to recruit to membranes different sets of downstream effectors directly responsible for vesicle formation, movement, tethering and fusion. RAB4A is involved in protein transport. Also plays a role in vesicular traffic. Mediates VEGFR2 endosomal trafficking to enhance VEGFR2 signaling. Acts as a regulator of platelet alpha-granule release during activation and aggregation of platelets. The polypeptide is Ras-related protein Rab-4A (Homo sapiens (Human)).